Here is a 1050-residue protein sequence, read N- to C-terminus: Beta-galactosidase (1050 aa).

Substrate is bound by residues Asn110 and Asp209. Asp209 contacts Na(+). Residues Glu432, His434, and Glu477 each coordinate Mg(2+). Substrate is bound by residues Glu477 and 553 to 556; that span reads EYAH. Residue Glu477 is the Proton donor of the active site. Glu553 functions as the Nucleophile in the catalytic mechanism. Asn613 contributes to the Mg(2+) binding site. Na(+)-binding residues include Phe617 and Asn620. Substrate is bound by residues Asn620 and Trp1023.

The protein belongs to the glycosyl hydrolase 2 family. Homotetramer. It depends on Mg(2+) as a cofactor. Na(+) serves as cofactor.

The catalysed reaction is Hydrolysis of terminal non-reducing beta-D-galactose residues in beta-D-galactosides.. The chain is Beta-galactosidase from Yersinia enterocolitica serotype O:8 / biotype 1B (strain NCTC 13174 / 8081).